The following is a 287-amino-acid chain: ATP synthase subunit a (287 aa).

Transmembrane regions (helical) follow at residues 37–57 (LDSV…MWLA), 96–116 (FIAP…AMDL), 149–169 (LGLS…IKGL), 187–207 (PVFA…EYVA), 224–244 (ELVF…LSGV), and 266–286 (TLQA…AHEA).

This sequence belongs to the ATPase A chain family. In terms of assembly, F-type ATPases have 2 components, CF(1) - the catalytic core - and CF(0) - the membrane proton channel. CF(1) has five subunits: alpha(3), beta(3), gamma(1), delta(1), epsilon(1). CF(0) has three main subunits: a(1), b(2) and c(9-12). The alpha and beta chains form an alternating ring which encloses part of the gamma chain. CF(1) is attached to CF(0) by a central stalk formed by the gamma and epsilon chains, while a peripheral stalk is formed by the delta and b chains.

Its subcellular location is the cell inner membrane. Its function is as follows. Key component of the proton channel; it plays a direct role in the translocation of protons across the membrane. This chain is ATP synthase subunit a, found in Acidovorax sp. (strain JS42).